The following is a 305-amino-acid chain: tRNA dimethylallyltransferase 1 (305 aa).

10 to 17 serves as a coordination point for ATP; sequence GPTASGKS. 12–17 contributes to the substrate binding site; that stretch reads TASGKS. Residues 35–38 are interaction with substrate tRNA; that stretch reads DSLT.

Belongs to the IPP transferase family. As to quaternary structure, monomer. Mg(2+) is required as a cofactor.

The enzyme catalyses adenosine(37) in tRNA + dimethylallyl diphosphate = N(6)-dimethylallyladenosine(37) in tRNA + diphosphate. In terms of biological role, catalyzes the transfer of a dimethylallyl group onto the adenine at position 37 in tRNAs that read codons beginning with uridine, leading to the formation of N6-(dimethylallyl)adenosine (i(6)A). The protein is tRNA dimethylallyltransferase 1 of Trichlorobacter lovleyi (strain ATCC BAA-1151 / DSM 17278 / SZ) (Geobacter lovleyi).